Reading from the N-terminus, the 361-residue chain is 5-formaminoimidazole-4-carboxamide-1-(beta)-D-ribofuranosyl 5'-monophosphate synthetase (361 aa).

5-amino-1-(5-phospho-beta-D-ribosyl)imidazole-4-carboxamide-binding residues include H27 and S94. Residues 116 to 348 (RRILRWESER…MGQRIAREIK (233 aa)) enclose the ATP-grasp domain. Residues 156–166 (KFPGARGGRGY), 199–202 (EEYV), and E230 each bind ATP. N258 serves as a coordination point for 5-amino-1-(5-phospho-beta-D-ribosyl)imidazole-4-carboxamide. The Mg(2+) site is built by Q297 and E310.

This sequence belongs to the phosphohexose mutase family. In terms of assembly, homohexamer. Dimer of trimers. Requires Mg(2+) as cofactor. It depends on Mn(2+) as a cofactor.

It carries out the reaction 5-amino-1-(5-phospho-beta-D-ribosyl)imidazole-4-carboxamide + formate + ATP = 5-formamido-1-(5-phospho-D-ribosyl)imidazole-4-carboxamide + ADP + phosphate. It functions in the pathway purine metabolism; IMP biosynthesis via de novo pathway; 5-formamido-1-(5-phospho-D-ribosyl)imidazole-4-carboxamide from 5-amino-1-(5-phospho-D-ribosyl)imidazole-4-carboxamide (formate route): step 1/1. Inhibited by ADP. Its function is as follows. Catalyzes the ATP- and formate-dependent formylation of 5-aminoimidazole-4-carboxamide-1-beta-d-ribofuranosyl 5'-monophosphate (AICAR) to 5-formaminoimidazole-4-carboxamide-1-beta-d-ribofuranosyl 5'-monophosphate (FAICAR) in the absence of folates. The polypeptide is 5-formaminoimidazole-4-carboxamide-1-(beta)-D-ribofuranosyl 5'-monophosphate synthetase (Methanocaldococcus jannaschii (strain ATCC 43067 / DSM 2661 / JAL-1 / JCM 10045 / NBRC 100440) (Methanococcus jannaschii)).